We begin with the raw amino-acid sequence, 206 residues long: ATP-dependent Clp protease proteolytic subunit (206 aa).

S108 (nucleophile) is an active-site residue. Residue H133 is part of the active site.

It belongs to the peptidase S14 family. Fourteen ClpP subunits assemble into 2 heptameric rings which stack back to back to give a disk-like structure with a central cavity, resembling the structure of eukaryotic proteasomes.

The protein localises to the cytoplasm. The catalysed reaction is Hydrolysis of proteins to small peptides in the presence of ATP and magnesium. alpha-casein is the usual test substrate. In the absence of ATP, only oligopeptides shorter than five residues are hydrolyzed (such as succinyl-Leu-Tyr-|-NHMec, and Leu-Tyr-Leu-|-Tyr-Trp, in which cleavage of the -Tyr-|-Leu- and -Tyr-|-Trp bonds also occurs).. In terms of biological role, cleaves peptides in various proteins in a process that requires ATP hydrolysis. Has a chymotrypsin-like activity. Plays a major role in the degradation of misfolded proteins. This Chromohalobacter salexigens (strain ATCC BAA-138 / DSM 3043 / CIP 106854 / NCIMB 13768 / 1H11) protein is ATP-dependent Clp protease proteolytic subunit.